The following is a 256-amino-acid chain: Distal membrane-arm assembly complex protein 2 (256 aa).

The residue at position 252 (S252) is a Phosphoserine.

This sequence belongs to the ATP synthase subunit s family. As to quaternary structure, interacts with incompletely assembled mitochondrial NADH:ubiquinone oxidoreductase complex (complex I).

The protein resides in the mitochondrion. Its function is as follows. Required for the assembly of the mitochondrial NADH:ubiquinone oxidoreductase complex (complex I). Involved in the assembly of the distal region of complex I. This chain is Distal membrane-arm assembly complex protein 2, found in Macaca fascicularis (Crab-eating macaque).